A 116-amino-acid polypeptide reads, in one-letter code: uncharacterized protein (116 aa).

The chain crosses the membrane as a helical span at residues 89 to 109 (VGFVILILLYILTNPNAIELI).

Belongs to the M.jannaschii MJ0023/MJ0349/MJ1072/MJ1074/MJ1107/MJECL16 family.

It localises to the membrane. This is an uncharacterized protein from Methanocaldococcus jannaschii (strain ATCC 43067 / DSM 2661 / JAL-1 / JCM 10045 / NBRC 100440) (Methanococcus jannaschii).